Reading from the N-terminus, the 414-residue chain is Esterase FrsA (414 aa).

It belongs to the FrsA family.

The catalysed reaction is a carboxylic ester + H2O = an alcohol + a carboxylate + H(+). Catalyzes the hydrolysis of esters. The protein is Esterase FrsA of Escherichia coli O81 (strain ED1a).